The following is a 373-amino-acid chain: STE20-related kinase adapter protein alpha (373 aa).

A Protein kinase domain is found at 11–321; that stretch reads YELLTVIGKG…ASTLLNHSFF (311 aa). The span at 255 to 281 shows a compositional bias: polar residues; that stretch reads STSRSAANSGLSESLAPSTPRTSNGDS. The disordered stretch occupies residues 255 to 288; it reads STSRSAANSGLSESLAPSTPRTSNGDSPSHPYHR. Phosphothreonine; by LKB1 is present on threonine 361.

This sequence belongs to the protein kinase superfamily. STE Ser/Thr protein kinase family. STE20 subfamily. As to quaternary structure, component of a trimeric complex composed of STK11/LKB1, STRAD (STRADA or STRADB) and CAB39/MO25 (CAB39/MO25alpha or CAB39L/MO25beta): the complex tethers STK11/LKB1 in the cytoplasm and stimulates its catalytic activity.

The protein localises to the nucleus. The protein resides in the cytoplasm. In terms of biological role, pseudokinase which, in complex with CAB39/MO25 (CAB39/MO25alpha or CAB39L/MO25beta), binds to and activates STK11/LKB1. Adopts a closed conformation typical of active protein kinases and binds STK11/LKB1 as a pseudosubstrate, promoting conformational change of STK11/LKB1 in an active conformation. The polypeptide is STE20-related kinase adapter protein alpha (STRADA) (Bos taurus (Bovine)).